Consider the following 270-residue polypeptide: Probable inositol 1-monophosphatase ImpA (270 aa).

Mg(2+)-binding residues include glutamate 69, aspartate 85, isoleucine 87, and aspartate 88. Glutamate 69 is a substrate binding site. Substrate-binding positions include 87-90 (IDGT), arginine 187, and aspartate 216. A Mg(2+)-binding site is contributed by aspartate 216.

It belongs to the inositol monophosphatase superfamily. It depends on Mg(2+) as a cofactor.

The catalysed reaction is a myo-inositol phosphate + H2O = myo-inositol + phosphate. It participates in polyol metabolism; myo-inositol biosynthesis; myo-inositol from D-glucose 6-phosphate: step 2/2. Catalyzes the dephosphorylation of inositol 1-phosphate (I-1-P) to yield free myo-inositol, a key metabolite in mycobacteria. The sequence is that of Probable inositol 1-monophosphatase ImpA (impA) from Mycobacterium tuberculosis (strain ATCC 25618 / H37Rv).